We begin with the raw amino-acid sequence, 513 residues long: MQLSPSEISGLIKQRIEKFDNSVELKSEGTIVSVADGIVTIYGLNDVVAGEMIKLPGDVYGLALNLNTDSVGAVVLGDYEHIKEGDKAYCTGRILEVPVGEALLGRVVDALGNPIDGKGEVATDLTSPIEKIAPGVIWRKSVDQALQTGIKSIDSMVPIGRGQRELIIGDRQIGKTAIAVDTIINQKGTGVKCIYVAIGQKASTIANIVRQLEEHGAMEHTIIVAATASDSAALQYIAPYAGCSMGEYFRDRGQDALIVYDDLTKQAWAYRQISLLLRRPPGREAYPGDVFYLHSRLLERAARVNEEYVEKFTNGEVKGKTGSLTALPIIETQAGDISAFVPTNVISITDGQIFLETDLFNSGLRPAINPGNSVSRVGGAAQTKIIKKLGGGIRLALAQYRELEAFSQFASDLDEATRAQLNRGQRVTELLKQKQFSTLSVALMALSLYAADNGYLDNLEVSEVIPFESALHALAETKYSDVIAEINETGKYDADIADKLKIIVEDCKANQAW.

ATP is bound at residue 169–176; the sequence is GDRQIGKT.

Belongs to the ATPase alpha/beta chains family. As to quaternary structure, F-type ATPases have 2 components, CF(1) - the catalytic core - and CF(0) - the membrane proton channel. CF(1) has five subunits: alpha(3), beta(3), gamma(1), delta(1), epsilon(1). CF(0) has three main subunits: a(1), b(2) and c(9-12). The alpha and beta chains form an alternating ring which encloses part of the gamma chain. CF(1) is attached to CF(0) by a central stalk formed by the gamma and epsilon chains, while a peripheral stalk is formed by the delta and b chains.

It is found in the cell inner membrane. The enzyme catalyses ATP + H2O + 4 H(+)(in) = ADP + phosphate + 5 H(+)(out). Functionally, produces ATP from ADP in the presence of a proton gradient across the membrane. The alpha chain is a regulatory subunit. In Francisella tularensis subsp. mediasiatica (strain FSC147), this protein is ATP synthase subunit alpha.